Reading from the N-terminus, the 609-residue chain is UvrABC system protein C (609 aa).

The 79-residue stretch at 19–97 folds into the GIY-YIG domain; it reads ISPGCYLWKS…IKKHNPRFNV (79 aa). In terms of domain architecture, UVR spans 208–243; sequence ESLVGDLSIKMSASSNRMDFEKAARYRDMLQRIQNF.

This sequence belongs to the UvrC family. As to quaternary structure, interacts with UvrB in an incision complex.

It is found in the cytoplasm. Functionally, the UvrABC repair system catalyzes the recognition and processing of DNA lesions. UvrC both incises the 5' and 3' sides of the lesion. The N-terminal half is responsible for the 3' incision and the C-terminal half is responsible for the 5' incision. This is UvrABC system protein C from Leptospira borgpetersenii serovar Hardjo-bovis (strain JB197).